Reading from the N-terminus, the 241-residue chain is Probable transcriptional regulatory protein AZOSEA20720 (241 aa).

The segment at 1 to 21 is disordered; that stretch reads MAGHSKWANIQHRKGRQDAKR.

It belongs to the TACO1 family.

It is found in the cytoplasm. This Aromatoleum aromaticum (strain DSM 19018 / LMG 30748 / EbN1) (Azoarcus sp. (strain EbN1)) protein is Probable transcriptional regulatory protein AZOSEA20720.